The chain runs to 102 residues: Small ribosomal subunit protein eS24 (102 aa).

Belongs to the eukaryotic ribosomal protein eS24 family.

This chain is Small ribosomal subunit protein eS24, found in Halorubrum lacusprofundi (strain ATCC 49239 / DSM 5036 / JCM 8891 / ACAM 34).